A 436-amino-acid chain; its full sequence is Adenylosuccinate synthetase (436 aa).

GTP-binding positions include 21–27 (GDEGKGK) and 49–51 (GHT). Aspartate 22 serves as the catalytic Proton acceptor. Mg(2+)-binding residues include aspartate 22 and glycine 49. Residues 22–25 (DEGK), 47–50 (NAGH), threonine 135, arginine 149, glutamine 230, threonine 245, and arginine 309 each bind IMP. The active-site Proton donor is histidine 50. 305–311 (TTTGRPR) contributes to the substrate binding site. GTP contacts are provided by residues arginine 311, 337–339 (KVD), and 423–425 (SSG).

It belongs to the adenylosuccinate synthetase family. As to quaternary structure, homodimer. Mg(2+) is required as a cofactor.

It is found in the cytoplasm. It catalyses the reaction IMP + L-aspartate + GTP = N(6)-(1,2-dicarboxyethyl)-AMP + GDP + phosphate + 2 H(+). The protein operates within purine metabolism; AMP biosynthesis via de novo pathway; AMP from IMP: step 1/2. Functionally, plays an important role in the de novo pathway of purine nucleotide biosynthesis. Catalyzes the first committed step in the biosynthesis of AMP from IMP. The polypeptide is Adenylosuccinate synthetase (Thermoplasma volcanium (strain ATCC 51530 / DSM 4299 / JCM 9571 / NBRC 15438 / GSS1)).